The primary structure comprises 275 residues: 3-methyl-2-oxobutanoate hydroxymethyltransferase (275 aa).

Mg(2+) is bound by residues aspartate 44 and aspartate 83. Residues 44–45 (DS), aspartate 83, and lysine 113 contribute to the 3-methyl-2-oxobutanoate site. Mg(2+) is bound at residue glutamate 115. The active-site Proton acceptor is glutamate 182.

The protein belongs to the PanB family. In terms of assembly, homodecamer; pentamer of dimers. Mg(2+) is required as a cofactor.

The protein localises to the cytoplasm. It catalyses the reaction 3-methyl-2-oxobutanoate + (6R)-5,10-methylene-5,6,7,8-tetrahydrofolate + H2O = 2-dehydropantoate + (6S)-5,6,7,8-tetrahydrofolate. The protein operates within cofactor biosynthesis; (R)-pantothenate biosynthesis; (R)-pantoate from 3-methyl-2-oxobutanoate: step 1/2. Catalyzes the reversible reaction in which hydroxymethyl group from 5,10-methylenetetrahydrofolate is transferred onto alpha-ketoisovalerate to form ketopantoate. This is 3-methyl-2-oxobutanoate hydroxymethyltransferase from Clostridium botulinum (strain Kyoto / Type A2).